The primary structure comprises 845 residues: Synaptonemal complex protein 1 (845 aa).

Positions 59-215 are interaction with SYCE3; it reads ETRQVYVDLN…YQLTEEKEAQ (157 aa). Coiled coils occupy residues 64 to 211 and 244 to 544; these read YVDL…LTEE and LRTE…EIEV. The tract at residues 550–644 is required for pH-induced assembly of C-terminal ends into antiparallel tetramers; that stretch reads EKLLGEVEKA…VSLKKQLEIE (95 aa). The Nuclear localization signal motif lies at 553 to 556; sequence LGEV. The stretch at 620–663 forms a coiled coil; the sequence is KTALETELSNIRNELVSLKKQLEIEREEKEKLKLEKENTAILKD. A DNA-binding region spans residues 657–845; that stretch reads NTAILKDKKD…RLKEAEKLFA (189 aa). Phosphoserine is present on Ser-676. Positions 684 to 703 are enriched in polar residues; the sequence is FDSKTTPSQNISRISSSMES. Positions 684-709 are disordered; that stretch reads FDSKTTPSQNISRISSSMESGKTKDN. A Nuclear localization signal motif is present at residues 753-756; that stretch reads KKRK. Residues 786–808 form a disordered region; sequence LYNNNSPNSHLTPKQTPLSLSTP.

In terms of assembly, structural component of synaptonemal complexes. Homotetramer that consists of an N-terminal four-helical bundle that bifurcates into two elongated C-terminal dimeric coiled coils. This tetrameric building block potentially self-assembles into a supramolecular zipper-like lattice to mediate meiotic chromosome synapsis. Self-assembly is likely initiated by local proton density at chromosome axis, which is predicted to trigger antiparallel back to back assembly of adjacent C-terminal ends into tetrameric structures that anchor to chromosomal DNA. Then the N-terminal ends are predicted to undergo cooperative antiparallel head to head assembly at the midline of synaptonemal complexes central element to form a zipper-like lattice between properly aligned homologous chromosomes. The nascent synapsis generated by SYCP1 is stabilized through interaction with central element proteins SYCE1 and SYCE2. Interacts (via tetrameric core) with SYCE3; the interaction remodels SYCP1 homotetramers to 2:1 heterotrimers with SYCE3. SYCP1/SYCE3 heterotrimers form lattice assemblies as part of the mature synaptonemal complex via both lateral and head-to-head interactions. Forms a complex with EWSR1, PRDM9, SYCP3 and REC8; complex formation is dependent of phosphorylated form of REC8 and requires PRDM9 bound to hotspot DNA; EWSR1 joins PRDM9 with the chromosomal axis through REC8. Interacts with SPO16.

It is found in the nucleus. Its subcellular location is the chromosome. The protein resides in the centromere. Major component of the transverse filaments of synaptonemal complexes, formed between homologous chromosomes during meiotic prophase. Required for normal assembly of the central element of the synaptonemal complexes. Required for normal centromere pairing during meiosis. Required for normal meiotic chromosome synapsis during oocyte and spermatocyte development and for normal male and female fertility. The chain is Synaptonemal complex protein 1 from Mesocricetus auratus (Golden hamster).